The sequence spans 421 residues: MLTNGPRGTKDVLPSEAYKWHYVEGVFKEVAKRFGFEEIRTPVFEHTELFERGVGDTTDVVEKEMYTFLDRGGRSITLKPEGTAPAARSFIEHKLYADTQPTKMFYITPVFRYERPQAGRFREHHQFGVEAFGASSASVDAEVINLAMSVYEAFGVKKLELRINSVGCPKCRAEYNKVLRAFLSSRLDQLCGTCQNRFERNPIRIIDCKSDSCQAQLTDVPLMMDHLCGECQDHFEELKKYLEASGLHYVIDPRIVRGLDYYTKTAFEIITEEAGKKGTVCGGGRYDKLVEDCGGPSTPGVGFGMGIERAILALEDQGIEIPKPEGLDVFIVTMGEKASYEGFKLLTALRRAGFSGDKDHLDRSVKAQFKYANKVNASYTIIIGENELEKGIAKLKNMANSEEIEIELKDITKLKEILSGR.

It belongs to the class-II aminoacyl-tRNA synthetase family. Homodimer.

It localises to the cytoplasm. The catalysed reaction is tRNA(His) + L-histidine + ATP = L-histidyl-tRNA(His) + AMP + diphosphate + H(+). The sequence is that of Histidine--tRNA ligase from Alkaliphilus oremlandii (strain OhILAs) (Clostridium oremlandii (strain OhILAs)).